Here is a 146-residue protein sequence, read N- to C-terminus: Hemoglobin subunit beta-1 (146 aa).

The Globin domain maps to 2–146 (HWTAEEKHLL…VAHALARRYH (145 aa)). Residues H63 and H92 each contribute to the heme b site.

This sequence belongs to the globin family. In terms of assembly, there are three forms of hemoglobin in Sphenodon: A, A' and D. Hb A is a tetramer of two alpha-A and two beta-1, Hb A' is a tetramer of two alpha-a and two beta-2, Hb D is a tetramer of two alpha-D and two beta-2.

Functionally, involved in oxygen transport from the lung to the various peripheral tissues. In Sphenodon punctatus (Tuatara), this protein is Hemoglobin subunit beta-1 (HBB1).